The sequence spans 495 residues: Probable histidine ammonia-lyase (495 aa).

The segment at residues 141-143 is a cross-link (5-imidazolinone (Ala-Gly)); it reads ASG. The residue at position 142 (Ser-142) is a 2,3-didehydroalanine (Ser).

It belongs to the PAL/histidase family. Contains an active site 4-methylidene-imidazol-5-one (MIO), which is formed autocatalytically by cyclization and dehydration of residues Ala-Ser-Gly.

Its subcellular location is the cytoplasm. The catalysed reaction is L-histidine = trans-urocanate + NH4(+). Its pathway is amino-acid degradation; L-histidine degradation into L-glutamate; N-formimidoyl-L-glutamate from L-histidine: step 1/3. The protein is Probable histidine ammonia-lyase of Thermoplasma volcanium (strain ATCC 51530 / DSM 4299 / JCM 9571 / NBRC 15438 / GSS1).